The sequence spans 137 residues: MILGIGTDLANIDRMEKTLARFGERFRNRVFTPLEQAKAERRADVAGTYAKRWAAKEACSKALGTGLRMGISWKDMSVANLETGQPVMRLTGWAAERLASMTPPGHEAVVHVSLTDDHPWAQAFVVIEARPRAAPPA.

Residues Asp8 and Glu57 each contribute to the Mg(2+) site.

Belongs to the P-Pant transferase superfamily. AcpS family. Requires Mg(2+) as cofactor.

It is found in the cytoplasm. The enzyme catalyses apo-[ACP] + CoA = holo-[ACP] + adenosine 3',5'-bisphosphate + H(+). In terms of biological role, transfers the 4'-phosphopantetheine moiety from coenzyme A to a Ser of acyl-carrier-protein. The polypeptide is Holo-[acyl-carrier-protein] synthase (Cereibacter sphaeroides (strain ATCC 17029 / ATH 2.4.9) (Rhodobacter sphaeroides)).